Consider the following 402-residue polypeptide: Ferredoxin--NADP reductase (402 aa).

Positions 18–74 constitute a CpcD-like domain; sequence NRLFIYEVVGLGGDGRNENSLVRKSGTTFITVPYARMNQEMQRITKLGGKIVSIRPA. Residues 80–101 are disordered; the sequence is IVSEGQSSAQASAQSPMASSTK. Over residues 85-99 the composition is skewed to low complexity; that stretch reads QSSAQASAQSPMASS. One can recognise an FAD-binding FR-type domain in the interval 120-245; the sequence is KTPFLGKCIE…TGPVGKEMLL (126 aa). FAD-binding positions include 179–182, 200–202, Tyr206, 218–220, and Thr260; these read RLYS, CVR, and VCS. Residues Ser182 and Arg202 each coordinate NADP(+). Residues Thr260, 292 to 293, 322 to 323, Lys332, 332 to 336, 361 to 362, and Glu400 each bind NADP(+); these read VP, SR, KVYVQ, and GL.

Belongs to the ferredoxin--NADP reductase type 1 family. The cofactor is FAD.

The protein localises to the cellular thylakoid membrane. The catalysed reaction is 2 reduced [2Fe-2S]-[ferredoxin] + NADP(+) + H(+) = 2 oxidized [2Fe-2S]-[ferredoxin] + NADPH. This Picosynechococcus sp. (strain ATCC 27264 / PCC 7002 / PR-6) (Agmenellum quadruplicatum) protein is Ferredoxin--NADP reductase (petH).